The sequence spans 273 residues: Large ribosomal subunit protein uL2cz/uL2cy (273 aa).

Disordered stretches follow at residues 1–20 and 225–273; these read MAKHLYKTPIPSTRKGTIDR and PVDH…RRRK.

It belongs to the universal ribosomal protein uL2 family. Part of the 50S ribosomal subunit.

The protein localises to the plastid. The protein resides in the chloroplast. The chain is Large ribosomal subunit protein uL2cz/uL2cy (rpl2-A) from Oryza nivara (Indian wild rice).